A 455-amino-acid chain; its full sequence is Bifunctional protein GlmU (455 aa).

The pyrophosphorylase stretch occupies residues 1-226 (MGLSVVILAA…EFEILGVNDR (226 aa)). UDP-N-acetyl-alpha-D-glucosamine-binding positions include 8 to 11 (LAAG), lysine 22, glutamine 73, 78 to 79 (GT), 99 to 101 (YGD), glycine 136, glutamate 151, asparagine 166, and asparagine 224. Aspartate 101 is a binding site for Mg(2+). Asparagine 224 contributes to the Mg(2+) binding site. The interval 227–247 (TQLASLERVWQRNVAEKIMAK) is linker. Residues 248–455 (GVSIADPNRF…WQRSVKKTDK (208 aa)) are N-acetyltransferase. UDP-N-acetyl-alpha-D-glucosamine-binding residues include arginine 330 and lysine 348. Histidine 360 (proton acceptor) is an active-site residue. The UDP-N-acetyl-alpha-D-glucosamine site is built by tyrosine 363 and asparagine 374. Residues alanine 377, 383-384 (NY), serine 402, alanine 420, and arginine 437 each bind acetyl-CoA.

This sequence in the N-terminal section; belongs to the N-acetylglucosamine-1-phosphate uridyltransferase family. It in the C-terminal section; belongs to the transferase hexapeptide repeat family. As to quaternary structure, homotrimer. It depends on Mg(2+) as a cofactor.

The protein resides in the cytoplasm. The enzyme catalyses alpha-D-glucosamine 1-phosphate + acetyl-CoA = N-acetyl-alpha-D-glucosamine 1-phosphate + CoA + H(+). It carries out the reaction N-acetyl-alpha-D-glucosamine 1-phosphate + UTP + H(+) = UDP-N-acetyl-alpha-D-glucosamine + diphosphate. The protein operates within nucleotide-sugar biosynthesis; UDP-N-acetyl-alpha-D-glucosamine biosynthesis; N-acetyl-alpha-D-glucosamine 1-phosphate from alpha-D-glucosamine 6-phosphate (route II): step 2/2. It participates in nucleotide-sugar biosynthesis; UDP-N-acetyl-alpha-D-glucosamine biosynthesis; UDP-N-acetyl-alpha-D-glucosamine from N-acetyl-alpha-D-glucosamine 1-phosphate: step 1/1. It functions in the pathway bacterial outer membrane biogenesis; LPS lipid A biosynthesis. Functionally, catalyzes the last two sequential reactions in the de novo biosynthetic pathway for UDP-N-acetylglucosamine (UDP-GlcNAc). The C-terminal domain catalyzes the transfer of acetyl group from acetyl coenzyme A to glucosamine-1-phosphate (GlcN-1-P) to produce N-acetylglucosamine-1-phosphate (GlcNAc-1-P), which is converted into UDP-GlcNAc by the transfer of uridine 5-monophosphate (from uridine 5-triphosphate), a reaction catalyzed by the N-terminal domain. The chain is Bifunctional protein GlmU from Francisella tularensis subsp. tularensis (strain SCHU S4 / Schu 4).